Consider the following 303-residue polypeptide: Movement protein (303 aa).

It belongs to the tobamovirus movement protein family.

It localises to the host cytoplasm. It is found in the host cytoskeleton. The protein localises to the host cell junction. Its subcellular location is the host plasmodesma. Transports viral genome to neighboring plant cells directly through plasmosdesmata, without any budding. The movement protein allows efficient cell to cell propagation, by bypassing the host cell wall barrier. Forms a ribonucleoprotein complex with viral RNA. Binds microtubules and modulates microtubule stability. Can bind double-stranded DNA. The protein is Movement protein (MP) of Cymbidium (ORSV).